Consider the following 379-residue polypeptide: Alkanesulfonate monooxygenase (379 aa).

The protein belongs to the SsuD family.

It catalyses the reaction an alkanesulfonate + FMNH2 + O2 = an aldehyde + FMN + sulfite + H2O + 2 H(+). Its function is as follows. Catalyzes the desulfonation of aliphatic sulfonates. This chain is Alkanesulfonate monooxygenase, found in Pseudomonas savastanoi pv. phaseolicola (strain 1448A / Race 6) (Pseudomonas syringae pv. phaseolicola (strain 1448A / Race 6)).